A 286-amino-acid polypeptide reads, in one-letter code: Translocon-associated protein subunit alpha (286 aa).

Residues 1-20 form the signal peptide; it reads MSSLRRLLLLLLLVFPATLL. Residues 21-207 lie on the Lumenal side of the membrane; sequence LRVGPGGSLA…EREDGLDGET (187 aa). Residues 37–75 show a composition bias toward acidic residues; that stretch reads EDEETVEDSIIEDEDDEAEVEEDEPTDLAEDKEEDDVSG. A disordered region spans residues 37 to 83; sequence EDEETVEDSIIEDEDDEAEVEEDEPTDLAEDKEEDDVSGEPEASPSA. N136 and N191 each carry an N-linked (GlcNAc...) asparagine glycan. A helical transmembrane segment spans residues 208-228; the sequence is IFMYMFLAGLGLLVVVGLHQL. Residues 229-286 are Cytoplasmic-facing; the sequence is LESRKRKRPIQKVEMGTSSQNDVDMSWIPQETLNQINKASPRRLPRKRAQKRSVGSDE. S247 bears the Phosphoserine mark. The residue at position 260 (T260) is a Phosphothreonine. Residues 261-286 are disordered; it reads LNQINKASPRRLPRKRAQKRSVGSDE. Phosphoserine is present on S268. Residues 268–279 show a composition bias toward basic residues; that stretch reads SPRRLPRKRAQK.

The protein belongs to the TRAP-alpha family. In terms of assembly, heterotetramer of TRAP-alpha, TRAP-beta, TRAP-delta and TRAP-gamma. Interacts with palmitoylated calnexin (CALX), the interaction is required for efficient folding of glycosylated proteins. In terms of processing, phosphorylated in its cytoplasmic tail.

Its subcellular location is the endoplasmic reticulum membrane. TRAP proteins are part of a complex whose function is to bind calcium to the ER membrane and thereby regulate the retention of ER resident proteins. May be involved in the recycling of the translocation apparatus after completion of the translocation process or may function as a membrane-bound chaperone facilitating folding of translocated proteins. The protein is Translocon-associated protein subunit alpha (SSR1) of Bos taurus (Bovine).